The following is a 59-amino-acid chain: Large ribosomal subunit protein bL32 (59 aa).

The segment covering 1–16 (MAVPKRKTSPSKRGMR) has biased composition (basic residues). The segment at 1–20 (MAVPKRKTSPSKRGMRRSHD) is disordered.

This sequence belongs to the bacterial ribosomal protein bL32 family.

This Sphingopyxis alaskensis (strain DSM 13593 / LMG 18877 / RB2256) (Sphingomonas alaskensis) protein is Large ribosomal subunit protein bL32.